The sequence spans 343 residues: Small ribosomal subunit biogenesis GTPase RsgA (343 aa).

Residues 116–275 (RGQLKPVAAN…LIDSPGIREF (160 aa)) enclose the CP-type G domain. GTP is bound by residues 163-166 (NKFD) and 217-225 (GQSGVGKSS). Residues Cys299, Cys304, His306, and Cys312 each contribute to the Zn(2+) site.

This sequence belongs to the TRAFAC class YlqF/YawG GTPase family. RsgA subfamily. In terms of assembly, monomer. Associates with 30S ribosomal subunit, binds 16S rRNA. Requires Zn(2+) as cofactor.

Its subcellular location is the cytoplasm. In terms of biological role, one of several proteins that assist in the late maturation steps of the functional core of the 30S ribosomal subunit. Helps release RbfA from mature subunits. May play a role in the assembly of ribosomal proteins into the subunit. Circularly permuted GTPase that catalyzes slow GTP hydrolysis, GTPase activity is stimulated by the 30S ribosomal subunit. This chain is Small ribosomal subunit biogenesis GTPase RsgA, found in Pseudomonas fluorescens (strain Pf0-1).